Consider the following 84-residue polypeptide: Toxin Tb1 (84 aa).

The signal sequence occupies residues 1 to 20; the sequence is MKGMILFISCLLLIGIVVEC. An LCN-type CS-alpha/beta domain is found at 21–82; it reads KEGYLMDHEG…VWDRATNKCG (62 aa). 4 disulfide bridges follow: cysteine 31–cysteine 81, cysteine 35–cysteine 57, cysteine 43–cysteine 62, and cysteine 47–cysteine 64. Cysteine 81 carries the post-translational modification Cysteine amide.

Belongs to the long (4 C-C) scorpion toxin superfamily. Sodium channel inhibitor family. Beta subfamily. In terms of tissue distribution, expressed by the venom gland.

The protein localises to the secreted. Functionally, beta toxins bind voltage-independently at site-4 of sodium channels (Nav) and shift the voltage of activation toward more negative potentials thereby affecting sodium channel activation and promoting spontaneous and repetitive firing. Is lethal to mice. The polypeptide is Toxin Tb1 (Tityus bahiensis (Brazilian scorpion)).